The chain runs to 320 residues: Heterogeneous nuclear ribonucleoprotein A1 (320 aa).

Residue methionine 1 is modified to N-acetylmethionine. Serine 2 bears the N-acetylserine; in Heterogeneous nuclear ribonucleoprotein A1, N-terminally processed mark. Serine 2 bears the Phosphoserine mark. An N6-acetyllysine; alternate modification is found at lysine 3. A Glycyl lysine isopeptide (Lys-Gly) (interchain with G-Cter in SUMO2); alternate cross-link involves residue lysine 3. Phosphoserine occurs at positions 4 and 6. The segment at 4–94 (SESPKEPEQL…EPKRAVSRED (91 aa)) is globular A domain. Lysine 8 is covalently cross-linked (Glycyl lysine isopeptide (Lys-Gly) (interchain with G-Cter in SUMO2)). 2 RRM domains span residues 14–97 (RKLF…DSQR) and 105–184 (KKIF…LSKQ). Serine 22 is modified (phosphoserine). A Glycyl lysine isopeptide (Lys-Gly) (interchain with G-Cter in SUMO2) cross-link involves residue lysine 78. Positions 95–185 (SQRPGAHLTV…EVRKALSKQE (91 aa)) are globular B domain. Lysine 113 is covalently cross-linked (Glycyl lysine isopeptide (Lys-Gly) (interchain with G-Cter in SUMO)). Glycyl lysine isopeptide (Lys-Gly) (interchain with G-Cter in SUMO2) cross-links involve residues lysine 179 and lysine 183. The segment at 182–216 (SKQEMASASSSQRGRSGSGNFGGGRGGGFGGNDNF) is disordered. Serine 192 bears the Phosphoserine; by MKNK2 mark. Arginine 194 carries the asymmetric dimethylarginine; alternate modification. The residue at position 194 (arginine 194) is a Dimethylated arginine; alternate. Arginine 194 is modified (omega-N-methylarginine; alternate). Residues 197–216 (SGSGNFGGGRGGGFGGNDNF) show a composition bias toward gly residues. A Phosphoserine modification is found at serine 199. 4 positions are modified to asymmetric dimethylarginine; alternate: arginine 206, arginine 218, arginine 225, and arginine 232. A Dimethylated arginine; alternate modification is found at arginine 206. Residues arginine 206, arginine 218, arginine 225, and arginine 232 each carry the omega-N-methylarginine; alternate modification. The RNA-binding RGG-box stretch occupies residues 218–240 (RGGNFSGRGGFGGSRGGGGYGGS). Residue arginine 225 is modified to Dimethylated arginine; alternate. A nuclear targeting sequence region spans residues 268–305 (NQSSNFGPMKGGNFGGRSLGPYGGGGQYFAKPRNQGGY). Positions 277–294 (KGGNFGGRSLGPYGGGGQ) are enriched in gly residues. The segment at 277–320 (KGGNFGGRSLGPYGGGGQYFAKPRNQGGYGGSSSSSSYGSGRRF) is disordered. At arginine 284 the chain carries Omega-N-methylarginine. Serine 285 carries the post-translational modification Phosphoserine. N6-acetyllysine; alternate is present on lysine 298. Lysine 298 participates in a covalent cross-link: Glycyl lysine isopeptide (Lys-Gly) (interchain with G-Cter in SUMO2); alternate. Arginine 300 is modified (omega-N-methylarginine). The span at 308 to 320 (SSSSSSYGSGRRF) shows a compositional bias: low complexity. Residue serine 309 is modified to Phosphoserine. Residues serine 310, serine 311, and serine 312 each carry the phosphoserine; by MKNK2 modification. Residues serine 313 and serine 316 each carry the phosphoserine modification. Residue arginine 318 is modified to Omega-N-methylarginine.

In terms of assembly, identified in the spliceosome C complex. Identified in a IGF2BP1-dependent mRNP granule complex containing untranslated mRNAs. Interacts with SEPT6, C9orf72, KHDRBS1, UBQLN2. Interacts with PPIA/CYPA. Sumoylated.

The protein localises to the nucleus. It localises to the cytoplasm. Its function is as follows. Involved in the packaging of pre-mRNA into hnRNP particles, transport of poly(A) mRNA from the nucleus to the cytoplasm and modulation of splice site selection. Plays a role in the splicing of pyruvate kinase PKM by binding repressively to sequences flanking PKM exon 9, inhibiting exon 9 inclusion and resulting in exon 10 inclusion and production of the PKM M2 isoform. Binds to the IRES and thereby inhibits the translation of the apoptosis protease activating factor APAF1. May bind to specific miRNA hairpins. This Macaca mulatta (Rhesus macaque) protein is Heterogeneous nuclear ribonucleoprotein A1 (HNRNPA1).